A 268-amino-acid chain; its full sequence is Energy-coupling factor transporter transmembrane protein EcfT (268 aa).

5 helical membrane passes run 29 to 49 (VFIFLVFMFMTRDPLLLTVAV), 75 to 95 (IIIVLTFVLHLFMTGGGEVIV), 107 to 127 (LIEGFMLAMKLAMIITIASLL), 152 to 172 (LPTHELALMMSIALRFIPTLI), and 242 to 262 (WGLKDSVVLAVFLLFAAAVMA).

It belongs to the energy-coupling factor EcfT family. In terms of assembly, forms a stable energy-coupling factor (ECF) transporter complex composed of 2 membrane-embedded substrate-binding proteins (S component), 2 ATP-binding proteins (A component) and 2 transmembrane proteins (T component). May be able to interact with more than 1 S component at a time.

Its subcellular location is the cell membrane. Functionally, transmembrane (T) component of an energy-coupling factor (ECF) ABC-transporter complex. Unlike classic ABC transporters this ECF transporter provides the energy necessary to transport a number of different substrates. In Bacillus selenitireducens (strain ATCC 700615 / DSM 15326 / MLS10), this protein is Energy-coupling factor transporter transmembrane protein EcfT.